We begin with the raw amino-acid sequence, 451 residues long: Protein-tyrosine kinase 6 (451 aa).

The 65-residue stretch at 8–72 folds into the SH3 domain; it reads HLGPKYVGLW…PHNYLAERET (65 aa). 4 positions are modified to phosphotyrosine; by autocatalysis: tyrosine 13, tyrosine 61, tyrosine 66, and tyrosine 114. The SH2 domain occupies 78 to 170; that stretch reads WFFGCISRSE…SHGLRLAAPC (93 aa). The linker stretch occupies residues 171-190; it reads RKHEPEPLPHWDDWERPREE. The 255-residue stretch at 191 to 445 folds into the Protein kinase domain; the sequence is FTLCRKLGSG…ALRERLSSFT (255 aa). Residues 197–205 and lysine 219 each bind ATP; that span reads LGSGYFGEV. Aspartate 312 functions as the Proton acceptor in the catalytic mechanism. Tyrosine 342 and tyrosine 351 each carry phosphotyrosine; by autocatalysis. Residue tyrosine 447 is modified to Phosphotyrosine.

It belongs to the protein kinase superfamily. Tyr protein kinase family. BRK/PTK6/SIK subfamily. As to quaternary structure, interacts with GAP-A.p65. Interacts (via SH3 and SH2 domains) with KHDRBS1. Interacts (via SH3 and SH2 domains) with phosphorylated IRS4. Interacts with ADAM15. Interacts (via SH3 domain) with SFPQ. Interacts with EGFR and ERBB2. Interacts with STAP2. Interacts with PNX. Interacts with SFPQ. Interacts with PTK/ATK. Interacts with CTNNB1. Post-translationally, autophosphorylated. Autophosphorylation of Tyr-342 leads to an increase of kinase activity. Tyr-447 binds to the SH2 domain when phosphorylated and negatively regulates kinase activity. In terms of tissue distribution, epithelia-specific. Very high level in colon and high levels in small intestine and prostate, and low levels in some fetal tissues. Not expressed in breast or ovarian tissue but expressed in high percentage of breast and ovarian cancers. Also overexpressed in some metastatic melanomas, lymphomas, colon cancers, squamous cell carcinomas and prostate cancers. Also found in melanocytes. Not expressed in heart, brain, placenta, lung, liver, skeletal muscle, kidney and pancreas. Isoform 2 is present in prostate epithelial cell lines derived from normal prostate and prostate adenocarcinomas, as well as in a variety of cell lines.

The protein localises to the cytoplasm. It is found in the nucleus. It localises to the cell projection. The protein resides in the ruffle. Its subcellular location is the membrane. It catalyses the reaction L-tyrosyl-[protein] + ATP = O-phospho-L-tyrosyl-[protein] + ADP + H(+). Its activity is regulated as follows. Activated by EGF, NRG1 and IGF1. Inhibited by SOCS3 to phosphorylate STAT3. Stabilized in the inactive form by an association between the SH3 domain and the SH2-TK linker region. Interaction between Trp-184 within SH2-TK linker region and the catalytic domain appears essential for positive regulation of kinase activity. In terms of biological role, non-receptor tyrosine-protein kinase implicated in the regulation of a variety of signaling pathways that control the differentiation and maintenance of normal epithelia, as well as tumor growth. Function seems to be context dependent and differ depending on cell type, as well as its intracellular localization. A number of potential nuclear and cytoplasmic substrates have been identified. These include the RNA-binding proteins: KHDRBS1/SAM68, KHDRBS2/SLM1, KHDRBS3/SLM2 and SFPQ/PSF; transcription factors: STAT3 and STAT5A/B and a variety of signaling molecules: ARHGAP35/p190RhoGAP, PXN/paxillin, BTK/ATK, STAP2/BKS. Phosphorylates the GTPase-activating protein ARAP1 following EGF stimulation which enhances EGFR signaling by delaying EGFR down-regulation. Also associates with a variety of proteins that are likely upstream of PTK6 in various signaling pathways, or for which PTK6 may play an adapter-like role. These proteins include ADAM15, EGFR, ERBB2, ERBB3 and IRS4. In normal or non-tumorigenic tissues, PTK6 promotes cellular differentiation and apoptosis. In tumors PTK6 contributes to cancer progression by sensitizing cells to mitogenic signals and enhancing proliferation, anchorage-independent survival and migration/invasion. Association with EGFR, ERBB2, ERBB3 may contribute to mammary tumor development and growth through enhancement of EGF-induced signaling via BTK/AKT and PI3 kinase. Contributes to migration and proliferation by contributing to EGF-mediated phosphorylation of ARHGAP35/p190RhoGAP, which promotes association with RASA1/p120RasGAP, inactivating RhoA while activating RAS. EGF stimulation resulted in phosphorylation of PNX/Paxillin by PTK6 and activation of RAC1 via CRK/CrKII, thereby promoting migration and invasion. PTK6 activates STAT3 and STAT5B to promote proliferation. Nuclear PTK6 may be important for regulating growth in normal epithelia, while cytoplasmic PTK6 might activate oncogenic signaling pathways. Its function is as follows. Inhibits PTK6 phosphorylation and PTK6 association with other tyrosine-phosphorylated proteins. The chain is Protein-tyrosine kinase 6 (PTK6) from Homo sapiens (Human).